We begin with the raw amino-acid sequence, 322 residues long: Homoserine kinase (322 aa).

106 to 116 (ALSSGMGGSAA) contributes to the ATP binding site.

It belongs to the GHMP kinase family. Homoserine kinase subfamily.

The protein localises to the cytoplasm. The catalysed reaction is L-homoserine + ATP = O-phospho-L-homoserine + ADP + H(+). The protein operates within amino-acid biosynthesis; L-threonine biosynthesis; L-threonine from L-aspartate: step 4/5. Catalyzes the ATP-dependent phosphorylation of L-homoserine to L-homoserine phosphate. The protein is Homoserine kinase of Xanthomonas campestris pv. campestris (strain B100).